A 535-amino-acid polypeptide reads, in one-letter code: Pyrichalasin C-18 hydroxylase (535 aa).

A helical transmembrane segment spans residues 42-62 (LPSGTLIVLAALSLALLVAVL). Residues Asn-139 and Asn-222 are each glycosylated (N-linked (GlcNAc...) asparagine). Cys-479 is a binding site for heme.

The protein belongs to the cytochrome P450 family. Heme is required as a cofactor.

Its subcellular location is the membrane. Its pathway is mycotoxin biosynthesis. In terms of biological role, cytochrome P450 monooxygenase; part of the gene cluster that mediates the biosynthesis of the mycotoxin pyrichalasin H, a tyrosine-derived cytochalasan that inhibits the growth of rice seedlings, but also inhibits lymphocyte capping and actin polymerization and alters cell morphology. Pyrichalasin H is indicated as the responsible agent for the genus-specific pathogenicity of M.grisea toward crabgrass. The first step in the pathway is catalyzed by the O-methyltransferase pyiA which methylates free tyrosine to generate the precursor O-methyltyrosine. The hybrid PKS-NRPS pyiS, assisted by the enoyl reductase pyiC, are responsible for fusion of the O-methyltyrosine precursor and the polyketide backbone. The polyketide synthase module (PKS) of pyiS is responsible for the synthesis of the polyketide backbone and the downstream nonribosomal peptide synthetase (NRPS) amidates the carboxyl end of the polyketide with the O-methyltyrosine precursor. As the NRPS A-domain demonstrates substrate tolerance, pyiS can also use phenylalanine, tyrosine and even para-chlorophenylalanine as amino acid precursor, which leads to the production of novel cytochalasans, including halogenated cytochalasans. Because pyiS lacks a designated enoylreductase (ER) domain, the required activity is provided the enoyl reductase pyiC. Reduction by the hydrolyase pyiE leads to 1,5-dihydropyrrolone, which is substrate for dehydration and intra-molecular Diels-Alder cyclization by the Diels-Alderase pyiF to yield the required isoindolone-fused macrocycle. The tailoring cytochrome P450 monooxygenases piyD and piyG catalyze the hydroxylation at C-18 and C-7, respectivily, whereas the short-chain dehydrogenase/reductase pyiH reduces the carbonyl at C-21 in preparation for the transfer of an acetyl group by the acetyltransferase pyiB. These 3 reactions whose order is not clear yet, lead to the production of O-methylpyrichalasin J, a deacetylated pyrichalasin H. Finally, pyiB to converts O-methylpyrichalasin J into the final product pyrichalasin H via acetylation of C-21. The chain is Pyrichalasin C-18 hydroxylase from Pyricularia grisea (Crabgrass-specific blast fungus).